A 976-amino-acid polypeptide reads, in one-letter code: 3-hydroxy-3-methylglutaryl-coenzyme A reductase (976 aa).

At 1–36 (MDHEGCQGQHPQQCCQWVSNAWSEFLDLLKNAETLD) the chain is on the lumenal side. Residues 36–217 (DIVIMLLGYI…FTFYTAILSI (182 aa)) enclose the SSD domain. The chain crosses the membrane as a helical span at residues 37 to 57 (IVIMLLGYIAMHLTFVSLFLS). The Cytoplasmic segment spans residues 58–64 (MRKMGSK). A helical transmembrane segment spans residues 65–85 (FWLGICTLFSSVFAFLFGLVV). Topologically, residues 86–90 (TTKLG) are lumenal. A helical membrane pass occupies residues 91–111 (VPISVILLSEGLPFLVVTIGF). Topologically, residues 112-169 (EKNIVLTRAVMSHAIEHRRIQAQNSKSGKRSPDGSTQNMIQYAVQAAIKEKGFEIIRD) are cytoplasmic. Residues 170-190 (YAIEIVILVIGAASGVQGGLQ) traverse the membrane as a helical segment. The Lumenal segment spans residues 191 to 193 (QFC). A helical transmembrane segment spans residues 194 to 214 (FLAAWTLFFDFILLFTFYTAI). The Cytoplasmic segment spans residues 215–272 (LSIKLRSTVSSVMSICVWPLRMMASRRVAENVAKGDDELNRVRGDAPLFGRKSSSIPK). Residues 273-293 (FKVLMILGFIFVNIVNICSIP) traverse the membrane as a helical segment. Topologically, residues 294 to 401 (FRNPSSMSTI…GGILKSLEDP (108 aa)) are lumenal. The helical transmembrane segment at 402 to 422 (VLSKWIVIALALSVALNGYLF) threads the bilayer. At 423–976 (NVARWGIKDP…RYSEVKAIDE (554 aa)) the chain is on the cytoplasmic side. The active-site Charge relay system is Glu618. 624–630 (SASRGCK) is a binding site for CoA. NADP(+) is bound by residues 685-687 (SRF) and 712-720 (DAMGMNMIS). Catalysis depends on Lys752, which acts as the Charge relay system. A CoA-binding site is contributed by 781 to 783 (VLK). The active-site Charge relay system is the Asp828. 923 to 924 (AH) is a binding site for CoA. The Proton donor role is filled by His924. Residues 926 to 954 (QHNRSAAPSRSTTPGSSHDARLTGHDQCP) are disordered. 928-929 (NR) is an NADP(+) binding site. A compositionally biased stretch (polar residues) spans 928–941 (NRSAAPSRSTTPGS). The span at 943-953 (HDARLTGHDQC) shows a compositional bias: basic and acidic residues.

It belongs to the HMG-CoA reductase family.

The protein resides in the endoplasmic reticulum membrane. The enzyme catalyses (R)-mevalonate + 2 NADP(+) + CoA = (3S)-3-hydroxy-3-methylglutaryl-CoA + 2 NADPH + 2 H(+). Its pathway is metabolic intermediate biosynthesis; (R)-mevalonate biosynthesis; (R)-mevalonate from acetyl-CoA: step 3/3. In terms of biological role, HMG-CoA reductase; part of the first module of ergosterol biosynthesis pathway that includes the early steps of the pathway, conserved across all eukaryotes, and which results in the formation of mevalonate from acetyl-coenzyme A (acetyl-CoA). In this module, the cytosolic acetyl-CoA acetyltransferase catalyzes the formation of acetoacetyl-CoA. The hydroxymethylglutaryl-CoA synthase then condenses acetyl-CoA with acetoacetyl-CoA to form HMG-CoA. The rate-limiting step of the early module is the reduction to mevalonate by the 3-hydroxy-3-methylglutaryl-coenzyme A (HMG-CoA) reductase HMGR. The chain is 3-hydroxy-3-methylglutaryl-coenzyme A reductase from Fusarium fujikuroi (Bakanae and foot rot disease fungus).